A 223-amino-acid chain; its full sequence is Twisted gastrulation protein homolog 1 (223 aa).

Positions 1–25 are cleaved as a signal peptide; that stretch reads MKLHYVAVLTLAILMFLTWLPESLS. N-linked (GlcNAc...) asparagine glycosylation is found at Asn52 and Asn81.

The protein belongs to the twisted gastrulation protein family. Interacts with CHRD and BMP4. This interaction enhances CHRD/BMP4 complex formation. Interacts with BMP7.

The protein localises to the secreted. In terms of biological role, may be involved in dorsoventral axis formation. Seems to antagonize BMP signaling by forming ternary complexes with CHRD and BMPs, thereby preventing BMPs from binding to their receptors. In addition to the anti-BMP function, also has pro-BMP activity, partly mediated by cleavage and degradation of CHRD, which releases BMPs from ternary complexes. May be an important modulator of BMP-regulated cartilage development and chondrocyte differentiation. May play a role in thymocyte development. This is Twisted gastrulation protein homolog 1 (TWSG1) from Homo sapiens (Human).